Reading from the N-terminus, the 349-residue chain is Probable dual-specificity RNA methyltransferase RlmN (349 aa).

Glu-93 serves as the catalytic Proton acceptor. Residues 99 to 329 (YKHGNTICVS…TTIRREMGSD (231 aa)) form the Radical SAM core domain. Residues Cys-106 and Cys-334 are joined by a disulfide bond. [4Fe-4S] cluster is bound by residues Cys-113, Cys-117, and Cys-120. S-adenosyl-L-methionine-binding positions include 160-161 (GE), Ser-192, 215-217 (SLH), and Asn-291. Cys-334 (S-methylcysteine intermediate) is an active-site residue.

Belongs to the radical SAM superfamily. RlmN family. Requires [4Fe-4S] cluster as cofactor.

The protein localises to the cytoplasm. The enzyme catalyses adenosine(2503) in 23S rRNA + 2 reduced [2Fe-2S]-[ferredoxin] + 2 S-adenosyl-L-methionine = 2-methyladenosine(2503) in 23S rRNA + 5'-deoxyadenosine + L-methionine + 2 oxidized [2Fe-2S]-[ferredoxin] + S-adenosyl-L-homocysteine. It catalyses the reaction adenosine(37) in tRNA + 2 reduced [2Fe-2S]-[ferredoxin] + 2 S-adenosyl-L-methionine = 2-methyladenosine(37) in tRNA + 5'-deoxyadenosine + L-methionine + 2 oxidized [2Fe-2S]-[ferredoxin] + S-adenosyl-L-homocysteine. In terms of biological role, specifically methylates position 2 of adenine 2503 in 23S rRNA and position 2 of adenine 37 in tRNAs. The chain is Probable dual-specificity RNA methyltransferase RlmN from Clostridium tetani (strain Massachusetts / E88).